The following is a 384-amino-acid chain: Monomeric sarcosine oxidase (384 aa).

6 to 36 (DVIVIGLGGMGSAAAHHLSARGARVLGLEKF) contacts FAD. Cys-315 is subject to S-8alpha-FAD cysteine.

The protein belongs to the MSOX/MTOX family. MSOX subfamily. As to quaternary structure, monomer. FAD serves as cofactor.

It is found in the cytoplasm. The enzyme catalyses sarcosine + O2 + H2O = formaldehyde + glycine + H2O2. Catalyzes the oxidative demethylation of sarcosine. This chain is Monomeric sarcosine oxidase, found in Streptomyces avermitilis (strain ATCC 31267 / DSM 46492 / JCM 5070 / NBRC 14893 / NCIMB 12804 / NRRL 8165 / MA-4680).